We begin with the raw amino-acid sequence, 60 residues long: Large ribosomal subunit protein uL30 (60 aa).

The protein belongs to the universal ribosomal protein uL30 family. As to quaternary structure, part of the 50S ribosomal subunit.

The protein is Large ribosomal subunit protein uL30 of Thermus thermophilus (strain ATCC BAA-163 / DSM 7039 / HB27).